Here is a 140-residue protein sequence, read N- to C-terminus: MRHGISQRKLSRKSGHRKALFRNMSAALIKHEQIVTTLPKAKELRPYVEKLITLAKRGGLSNRRLAMGRLQDETQLKKLFDELADRYSDRDGGYTRIVKAGYRASDSAQLAVIELVDRDEDAKGQDSGPVMVDEDDFAEA.

Residues 120–140 (EDAKGQDSGPVMVDEDDFAEA) form a disordered region.

The protein belongs to the bacterial ribosomal protein bL17 family. As to quaternary structure, part of the 50S ribosomal subunit. Contacts protein L32.

In Erythrobacter litoralis (strain HTCC2594), this protein is Large ribosomal subunit protein bL17.